A 439-amino-acid chain; its full sequence is NAD-dependent malic enzyme 1 (439 aa).

An ACT domain is found at Thr9–Glu84. Tyr112 functions as the Proton donor in the catalytic mechanism. Lys167 (proton acceptor) is an active-site residue. Glu209, Asp210, and Asp235 together coordinate a divalent metal cation. NAD(+) contacts are provided by residues Leu268–Ala271, Asn347, and Asn373.

The protein belongs to the malic enzymes family. The cofactor is Mg(2+). Requires Mn(2+) as cofactor.

The catalysed reaction is (S)-malate + NAD(+) = pyruvate + CO2 + NADH. The enzyme catalyses oxaloacetate + H(+) = pyruvate + CO2. In terms of biological role, catalyzes the decarboxylation of malate to pyruvate. Is specific for NAD, cannot use NADP. Can also catalyze the decarboxylation of oxaloacetate. Involved in keeping the ATP levels high. This chain is NAD-dependent malic enzyme 1, found in Bacillus subtilis (strain 168).